Here is a 282-residue protein sequence, read N- to C-terminus: Para-Rep C1 (282 aa).

One can recognise a CRESS-DNA virus Rep endonuclease domain in the interval 1–99; the sequence is MASKRWCFTL…ETLISEIGAP (99 aa). An RCR-1 motif is present at residues 7-10; the sequence is CFTL. Residues E38 and H47 each contribute to the a divalent metal cation site. Positions 47 to 49 match the RCR-2 motif; that stretch reads HLQ. The Nuclear localization signal motif lies at 56–77; sequence KMIRLGGLKKKFGYRAHWEIAK. The active-site For DNA cleavage activity is Y86. An RCR-3 motif is present at residues 86–89; that stretch reads YCTK. S94 is a binding site for a divalent metal cation. Residue 174 to 182 coordinates ATP; the sequence is GSDGGEGKS.

The protein belongs to the nanoviridea/circoviridae replication-associated protein family. In terms of assembly, homooligomer (Potential). Rep binds to repeated DNA motifs (iterons). The cofactor is Mg(2+). Requires Mn(2+) as cofactor.

The protein localises to the host nucleus. The enzyme catalyses ATP + H2O = ADP + phosphate + H(+). Its function is as follows. Initiates and terminates the replication only of its own subviral DNA molecule. The closed circular ssDNA genome is first converted to a superhelical dsDNA. Rep binds a specific hairpin at the genome origin of replication. Introduces an endonucleolytic nick within the intergenic region of the genome, thereby initiating the rolling circle replication (RCR). Following cleavage, binds covalently to the 5'-phosphate of DNA as a tyrosyl ester. The cleavage gives rise to a free 3'-OH that serves as a primer for the cellular DNA polymerase. The polymerase synthesizes the (+) strand DNA by rolling circle mechanism. After one round of replication, a Rep-catalyzed nucleotidyl transfer reaction releases a circular single-stranded virus genome, thereby terminating the replication. Displays origin-specific DNA cleavage, nucleotidyl transferase, ATPase and helicase activities. The sequence is that of Para-Rep C1 (C1) from Faba bean necrotic yellows C11 alphasatellite (FBNYC11A).